The chain runs to 336 residues: MIVLGIESSCDETGLAIYDYSKKKLIADELYSQVKLHKKYGGVVPELASREHIAKLNLLAKKIFKETGLSFEDIDCIAYTAMPGLVGALMVGATFAKTLGLIHNIDTIAVHHLEGHLLSPLLDHNSNIEYPFVALLVSGGHTQLFEVKEFGEYSLLGESIDDAAGEAFDKTTKLLGMGYPGGVEVANLADQATDKSKYILPRPMKNKPNLDFSFSGLKTAVLNTWYDEQDQSLENKANLCYALQNAAIDVLVSKCAKALQKTKNTRLVISGGVSANKLLRHQLDLLAKNREYQIFFPPMKYCTDNGAMIALAGAYRYVNGFKDSNLEINVKARSPL.

The Fe cation site is built by His-112 and His-116. Substrate is bound by residues 136–140, Asp-169, Gly-182, and Asn-276; that span reads LVSGG. Asp-304 serves as a coordination point for Fe cation.

This sequence belongs to the KAE1 / TsaD family. The cofactor is Fe(2+).

It is found in the cytoplasm. The enzyme catalyses L-threonylcarbamoyladenylate + adenosine(37) in tRNA = N(6)-L-threonylcarbamoyladenosine(37) in tRNA + AMP + H(+). In terms of biological role, required for the formation of a threonylcarbamoyl group on adenosine at position 37 (t(6)A37) in tRNAs that read codons beginning with adenine. Is involved in the transfer of the threonylcarbamoyl moiety of threonylcarbamoyl-AMP (TC-AMP) to the N6 group of A37, together with TsaE and TsaB. TsaD likely plays a direct catalytic role in this reaction. This is tRNA N6-adenosine threonylcarbamoyltransferase from Francisella tularensis subsp. holarctica (strain FTNF002-00 / FTA).